The chain runs to 246 residues: Ribonuclease 3 (246 aa).

One can recognise an RNase III domain in the interval 10 to 135 (LENFLTLNNI…FVAAIYLDLG (126 aa)). Mg(2+) is bound at residue Glu50. Asp54 is a catalytic residue. Residues Asp121 and Glu124 each coordinate Mg(2+). Glu124 is an active-site residue. A DRBM domain is found at 161-230 (DPKSSFQEYI…ATRALETLKA (70 aa)).

The protein belongs to the ribonuclease III family. Homodimer. Mg(2+) serves as cofactor.

Its subcellular location is the cytoplasm. It catalyses the reaction Endonucleolytic cleavage to 5'-phosphomonoester.. Functionally, digests double-stranded RNA. Involved in the processing of primary rRNA transcript to yield the immediate precursors to the large and small rRNAs (23S and 16S). Processes some mRNAs, and tRNAs when they are encoded in the rRNA operon. Processes pre-crRNA and tracrRNA of type II CRISPR loci if present in the organism. This is Ribonuclease 3 from Mycoplasma mobile (strain ATCC 43663 / 163K / NCTC 11711) (Mesomycoplasma mobile).